Reading from the N-terminus, the 250-residue chain is DNA polymerase sliding clamp (250 aa).

It belongs to the PCNA family. In terms of assembly, homotrimer. The subunits circularize to form a toroid; DNA passes through its center. Replication factor C (RFC) is required to load the toroid on the DNA.

Functionally, sliding clamp subunit that acts as a moving platform for DNA processing. Responsible for tethering the catalytic subunit of DNA polymerase and other proteins to DNA during high-speed replication. The chain is DNA polymerase sliding clamp from Methanococcus maripaludis (strain C7 / ATCC BAA-1331).